The primary structure comprises 429 residues: UDP-N-acetylglucosamine 1-carboxyvinyltransferase 2 (429 aa).

Phosphoenolpyruvate is bound at residue 22–23 (KN). Residue arginine 93 coordinates UDP-N-acetyl-alpha-D-glucosamine. The active-site Proton donor is the cysteine 117. Position 117 is a 2-(S-cysteinyl)pyruvic acid O-phosphothioketal (cysteine 117). Residues 122–126 (RPIDQ), aspartate 305, and isoleucine 327 each bind UDP-N-acetyl-alpha-D-glucosamine.

It belongs to the EPSP synthase family. MurA subfamily.

It localises to the cytoplasm. It catalyses the reaction phosphoenolpyruvate + UDP-N-acetyl-alpha-D-glucosamine = UDP-N-acetyl-3-O-(1-carboxyvinyl)-alpha-D-glucosamine + phosphate. Its pathway is cell wall biogenesis; peptidoglycan biosynthesis. In terms of biological role, cell wall formation. Adds enolpyruvyl to UDP-N-acetylglucosamine. This is UDP-N-acetylglucosamine 1-carboxyvinyltransferase 2 from Bacillus cereus (strain ATCC 14579 / DSM 31 / CCUG 7414 / JCM 2152 / NBRC 15305 / NCIMB 9373 / NCTC 2599 / NRRL B-3711).